We begin with the raw amino-acid sequence, 328 residues long: Bidirectional sugar transporter SWEET16 (328 aa).

Topologically, residues 1–5 (MADPS) are extracellular. The chain crosses the membrane as a helical span at residues 6-26 (FFVGIVGNVISILVFASPIAT). Positions 6-92 (FFVGIVGNVI…TLYLAYAPRE (87 aa)) constitute a MtN3/slv 1 domain. Residues 27–38 (FRRIVRSKSTEE) lie on the Cytoplasmic side of the membrane. Residues 39–56 (FRWLPYVTTLLSTSLWTF) form a helical membrane-spanning segment. Residues 57–63 (YGLHKPG) are Extracellular-facing. A helical membrane pass occupies residues 64-84 (GLLIVTVNGSGAALEAIYVTL). The Cytoplasmic segment spans residues 85 to 99 (YLAYAPRETKAKMVK). The helical transmembrane segment at 100-120 (VVLAVNVGALAAVVAVALVAL) threads the bilayer. Topologically, residues 121-125 (HGGVR) are extracellular. The chain crosses the membrane as a helical span at residues 126–146 (LFVVGVLCAALTIGMYAAPMA). Residues 127–213 (FVVGVLCAAL…LYMAYRRTKK (87 aa)) form the MtN3/slv 2 domain. The Cytoplasmic segment spans residues 147-161 (AMRTVVKTRSVEYMP). The chain crosses the membrane as a helical span at residues 162 to 182 (FSLSFFLFLNGGVWSVYSLLV). Topologically, residues 183 to 185 (KDY) are extracellular. A helical membrane pass occupies residues 186 to 206 (FIGIPNAIGFALGTAQLALYM). Topologically, residues 207-328 (AYRRTKKPAG…ATTAGPGDRH (122 aa)) are cytoplasmic. Basic residues predominate over residues 288–299 (HQHHGGHHHHHR). Residues 288–328 (HQHHGGHHHHHRFDTVPDDDDEAVAAGGTTPATTAGPGDRH) form a disordered region. Residues 312–328 (AAGGTTPATTAGPGDRH) are compositionally biased toward low complexity.

Belongs to the SWEET sugar transporter family. In terms of assembly, forms homooligomers and/or heterooligomers.

It is found in the cell membrane. Its function is as follows. Mediates both low-affinity uptake and efflux of sugar across the plasma membrane. The sequence is that of Bidirectional sugar transporter SWEET16 (SWEET16) from Oryza sativa subsp. japonica (Rice).